A 510-amino-acid polypeptide reads, in one-letter code: NAD(P)H-quinone oxidoreductase subunit 2 B, chloroplastic (510 aa).

The next 13 helical transmembrane spans lie at 26–46 (LFDG…ILLL), 57–77 (IPWF…ALLF), 99–119 (IFQF…VEYI), 124–144 (MAIT…MFLC), 149–169 (LITI…LSGY), 183–203 (YLLM…WLYG), 227–247 (PGIS…LSPA), 295–315 (WHPL…LIAI), 323–342 (MLAY…IIVG), 354–374 (YMLF…LFGL), 395–415 (ALSL…AGFF), 418–438 (LHLF…IGLF), and 484–504 (MIVC…IIAI).

This sequence belongs to the complex I subunit 2 family. In terms of assembly, NDH is composed of at least 16 different subunits, 5 of which are encoded in the nucleus.

The protein resides in the plastid. The protein localises to the chloroplast thylakoid membrane. The enzyme catalyses a plastoquinone + NADH + (n+1) H(+)(in) = a plastoquinol + NAD(+) + n H(+)(out). It carries out the reaction a plastoquinone + NADPH + (n+1) H(+)(in) = a plastoquinol + NADP(+) + n H(+)(out). NDH shuttles electrons from NAD(P)H:plastoquinone, via FMN and iron-sulfur (Fe-S) centers, to quinones in the photosynthetic chain and possibly in a chloroplast respiratory chain. The immediate electron acceptor for the enzyme in this species is believed to be plastoquinone. Couples the redox reaction to proton translocation, and thus conserves the redox energy in a proton gradient. In Oenothera argillicola (Appalachian evening primrose), this protein is NAD(P)H-quinone oxidoreductase subunit 2 B, chloroplastic.